The chain runs to 282 residues: Eukaryotic translation initiation factor 3 subunit G (282 aa).

The interval 1–27 (MSSSKSLDWADDEDYGTGLPSIQTFDN) is disordered. Phosphoserine occurs at positions 160 and 164. The region spanning 202–280 (ATLRVTNLSD…LILRCEFSKP (79 aa)) is the RRM domain.

It belongs to the eIF-3 subunit G family. Component of the eukaryotic translation initiation factor 3 (eIF-3) complex. The eIF-3 complex appears to include tif32/eif3a, SPAC25G10.08/eif3b, tif33/eif3c, SPBC4C3.07/eif3f, tif35/eif3g and sum1/eif3i. This set of common subunits may also associate exclusively with either moe1/eif3d and int6/eif3e, or with SPAC821.05/eif3h and SPAC1751.03/eif3m. The eIF-3 complex may also include SPAC3A12.13c/eif3j.

It localises to the cytoplasm. RNA-binding component of the eukaryotic translation initiation factor 3 (eIF-3) complex, which is involved in protein synthesis of a specialized repertoire of mRNAs and, together with other initiation factors, stimulates binding of mRNA and methionyl-tRNAi to the 40S ribosome. The eIF-3 complex specifically targets and initiates translation of a subset of mRNAs involved in cell proliferation. This subunit can bind 18S rRNA. The sequence is that of Eukaryotic translation initiation factor 3 subunit G (tif35) from Schizosaccharomyces pombe (strain 972 / ATCC 24843) (Fission yeast).